The sequence spans 186 residues: Bifunctional protein PyrR (186 aa).

Positions 101-113 (VVLVDDVLYTGRT) match the PRPP-binding motif.

This sequence belongs to the purine/pyrimidine phosphoribosyltransferase family. PyrR subfamily.

It carries out the reaction UMP + diphosphate = 5-phospho-alpha-D-ribose 1-diphosphate + uracil. Regulates the transcription of the pyrimidine nucleotide (pyr) operon in response to exogenous pyrimidines. Functionally, also displays a weak uracil phosphoribosyltransferase activity which is not physiologically significant. This chain is Bifunctional protein PyrR, found in Syntrophobacter fumaroxidans (strain DSM 10017 / MPOB).